The chain runs to 263 residues: Probable ribosomal RNA small subunit methyltransferase A (263 aa).

S-adenosyl-L-methionine contacts are provided by leucine 12, glycine 37, glutamate 58, aspartate 83, and asparagine 100.

The protein belongs to the class I-like SAM-binding methyltransferase superfamily. rRNA adenine N(6)-methyltransferase family. RsmA subfamily.

The protein localises to the cytoplasm. Functionally, specifically dimethylates two adjacent adenosines in the loop of a conserved hairpin near the 3'-end of 16S rRNA in the 30S particle. May play a critical role in biogenesis of 30S subunits. This is Probable ribosomal RNA small subunit methyltransferase A from Methanococcus maripaludis (strain C5 / ATCC BAA-1333).